The primary structure comprises 426 residues: F-box protein At2g15640 (426 aa).

The region spanning 1 to 48 (MNPSTITNDLTVEILSRLPAKSVARFHCVSKQWGSIFGSPYFKELFLT) is the F-box domain.

This is F-box protein At2g15640 from Arabidopsis thaliana (Mouse-ear cress).